The following is a 2352-amino-acid chain: Cell wall alpha-1,3-glucan synthase mok12 (2352 aa).

Residues 1786 to 1813 form a disordered region; that stretch reads SNDFGIREVPLSDANQSSQADSTSIDRY. The segment covering 1798-1813 has biased composition (polar residues); the sequence is DANQSSQADSTSIDRY.

This sequence belongs to the glycosyltransferase group 1 family.

The enzyme catalyses [(1-&gt;3)-alpha-D-glucosyl](n) + UDP-alpha-D-glucose = [(1-&gt;3)-alpha-D-glucosyl](n+1) + UDP + H(+). The protein is Cell wall alpha-1,3-glucan synthase mok12 (mok12) of Schizosaccharomyces pombe (strain 972 / ATCC 24843) (Fission yeast).